Consider the following 346-residue polypeptide: Fe(3+) ions import ATP-binding protein FbpC 2 (346 aa).

One can recognise an ABC transporter domain in the interval 2–234; that stretch reads LELHRVSKSF…PNSEDIATFL (233 aa). 34 to 41 serves as a coordination point for ATP; sequence GPSGSGKT.

This sequence belongs to the ABC transporter superfamily. Fe(3+) ion importer (TC 3.A.1.10) family. In terms of assembly, the complex is composed of two ATP-binding proteins (FbpC), two transmembrane proteins (FbpB) and a solute-binding protein (FbpA).

It localises to the cell inner membrane. The enzyme catalyses Fe(3+)(out) + ATP + H2O = Fe(3+)(in) + ADP + phosphate + H(+). Functionally, part of the ABC transporter complex FbpABC involved in Fe(3+) ions import. Responsible for energy coupling to the transport system. This Pectobacterium atrosepticum (strain SCRI 1043 / ATCC BAA-672) (Erwinia carotovora subsp. atroseptica) protein is Fe(3+) ions import ATP-binding protein FbpC 2.